Consider the following 324-residue polypeptide: Delta-aminolevulinic acid dehydratase (324 aa).

Residues Cys-118, Cys-120, and Cys-128 each contribute to the Zn(2+) site. Lys-195 serves as the catalytic Schiff-base intermediate with substrate. 2 residues coordinate 5-aminolevulinate: Arg-205 and Arg-217. Glu-233 contacts Mg(2+). The Schiff-base intermediate with substrate role is filled by Lys-248. Residues Ser-274 and Tyr-313 each contribute to the 5-aminolevulinate site.

Belongs to the ALAD family. In terms of assembly, homooctamer. It depends on Zn(2+) as a cofactor.

The catalysed reaction is 2 5-aminolevulinate = porphobilinogen + 2 H2O + H(+). The protein operates within porphyrin-containing compound metabolism; protoporphyrin-IX biosynthesis; coproporphyrinogen-III from 5-aminolevulinate: step 1/4. Catalyzes an early step in the biosynthesis of tetrapyrroles. Binds two molecules of 5-aminolevulinate per subunit, each at a distinct site, and catalyzes their condensation to form porphobilinogen. This chain is Delta-aminolevulinic acid dehydratase (hemB), found in Staphylococcus aureus (strain NCTC 8325 / PS 47).